A 227-amino-acid polypeptide reads, in one-letter code: Cytochrome c oxidase subunit 2 (227 aa).

At 1 to 14 the chain is on the mitochondrial intermembrane side; it reads MAYPFQLGFQDATS. Residues 15-45 traverse the membrane as a helical segment; it reads PIMEELLHFHDHTLMIVFLISSLVLYIISLM. The Mitochondrial matrix portion of the chain corresponds to 46–59; the sequence is LTTKLTHTSTMDAQ. The chain crosses the membrane as a helical span at residues 60 to 87; the sequence is EVETIWTILPAIILILIALPSLRILYMM. Over 88–227 the chain is Mitochondrial intermembrane; sequence DEINNPSLTV…YFEKWSASML (140 aa). His161, Cys196, Glu198, Cys200, His204, and Met207 together coordinate Cu cation. Glu198 lines the Mg(2+) pocket. Tyr218 is subject to Phosphotyrosine.

It belongs to the cytochrome c oxidase subunit 2 family. In terms of assembly, component of the cytochrome c oxidase (complex IV, CIV), a multisubunit enzyme composed of 14 subunits. The complex is composed of a catalytic core of 3 subunits MT-CO1, MT-CO2 and MT-CO3, encoded in the mitochondrial DNA, and 11 supernumerary subunits COX4I, COX5A, COX5B, COX6A, COX6B, COX6C, COX7A, COX7B, COX7C, COX8 and NDUFA4, which are encoded in the nuclear genome. The complex exists as a monomer or a dimer and forms supercomplexes (SCs) in the inner mitochondrial membrane with NADH-ubiquinone oxidoreductase (complex I, CI) and ubiquinol-cytochrome c oxidoreductase (cytochrome b-c1 complex, complex III, CIII), resulting in different assemblies (supercomplex SCI(1)III(2)IV(1) and megacomplex MCI(2)III(2)IV(2)). Found in a complex with TMEM177, COA6, COX18, COX20, SCO1 and SCO2. Interacts with TMEM177 in a COX20-dependent manner. Interacts with COX20. Interacts with COX16. Requires Cu cation as cofactor.

It localises to the mitochondrion inner membrane. The enzyme catalyses 4 Fe(II)-[cytochrome c] + O2 + 8 H(+)(in) = 4 Fe(III)-[cytochrome c] + 2 H2O + 4 H(+)(out). In terms of biological role, component of the cytochrome c oxidase, the last enzyme in the mitochondrial electron transport chain which drives oxidative phosphorylation. The respiratory chain contains 3 multisubunit complexes succinate dehydrogenase (complex II, CII), ubiquinol-cytochrome c oxidoreductase (cytochrome b-c1 complex, complex III, CIII) and cytochrome c oxidase (complex IV, CIV), that cooperate to transfer electrons derived from NADH and succinate to molecular oxygen, creating an electrochemical gradient over the inner membrane that drives transmembrane transport and the ATP synthase. Cytochrome c oxidase is the component of the respiratory chain that catalyzes the reduction of oxygen to water. Electrons originating from reduced cytochrome c in the intermembrane space (IMS) are transferred via the dinuclear copper A center (CU(A)) of subunit 2 and heme A of subunit 1 to the active site in subunit 1, a binuclear center (BNC) formed by heme A3 and copper B (CU(B)). The BNC reduces molecular oxygen to 2 water molecules using 4 electrons from cytochrome c in the IMS and 4 protons from the mitochondrial matrix. The protein is Cytochrome c oxidase subunit 2 (MT-CO2) of Felis catus (Cat).